Here is a 256-residue protein sequence, read N- to C-terminus: Imidazole glycerol phosphate synthase subunit HisF (256 aa).

Catalysis depends on residues D12 and D131.

It belongs to the HisA/HisF family. In terms of assembly, heterodimer of HisH and HisF.

It localises to the cytoplasm. The enzyme catalyses 5-[(5-phospho-1-deoxy-D-ribulos-1-ylimino)methylamino]-1-(5-phospho-beta-D-ribosyl)imidazole-4-carboxamide + L-glutamine = D-erythro-1-(imidazol-4-yl)glycerol 3-phosphate + 5-amino-1-(5-phospho-beta-D-ribosyl)imidazole-4-carboxamide + L-glutamate + H(+). The protein operates within amino-acid biosynthesis; L-histidine biosynthesis; L-histidine from 5-phospho-alpha-D-ribose 1-diphosphate: step 5/9. In terms of biological role, IGPS catalyzes the conversion of PRFAR and glutamine to IGP, AICAR and glutamate. The HisF subunit catalyzes the cyclization activity that produces IGP and AICAR from PRFAR using the ammonia provided by the HisH subunit. This Beutenbergia cavernae (strain ATCC BAA-8 / DSM 12333 / CCUG 43141 / JCM 11478 / NBRC 16432 / NCIMB 13614 / HKI 0122) protein is Imidazole glycerol phosphate synthase subunit HisF.